The chain runs to 344 residues: Arginine N-succinyltransferase (344 aa).

Leucine 125 is a succinyl-CoA binding site. Histidine 229 (proton donor) is an active-site residue.

The protein belongs to the arginine N-succinyltransferase family.

The enzyme catalyses succinyl-CoA + L-arginine = N(2)-succinyl-L-arginine + CoA + H(+). The protein operates within amino-acid degradation; L-arginine degradation via AST pathway; L-glutamate and succinate from L-arginine: step 1/5. Its function is as follows. Catalyzes the transfer of succinyl-CoA to arginine to produce N(2)-succinylarginine. The sequence is that of Arginine N-succinyltransferase from Escherichia coli (strain 55989 / EAEC).